Consider the following 533-residue polypeptide: MDFIKPTIEYGDVWPLLVVFGVAAVGVLVEGFVPRAQRYLVQAALAIAGVVVALVGTILVARDLDVLGDGAARGAIDVEGTIAVDGPALFIWGMLLVFALGGALLFAERRLEGGVSAFAGQAAALPGTEAERQASTRGLEHTEVYPLMMFALGGMMLFAAANDLLTLFVALEVLSLPLYLLSGLARRRRLLSQEAALKYFMLGAFSSGFFLYGAALVYGFSGSMGFAEINEAVRDDVGNQTLLLIGIGMLSVGLLFKVGAVPFHSWTPDVYQGAPTAVTAFMAAGTKIAAFGAMLRLFYVAFGSDRWSWQPMLWIIAILTMLVGALIAIVQTDMKRMLAYSSVAHTGFLLTGVLGVQQASELADGEVTSLQAVLFYLVTYGFAVVGAFAVVTLVRDAGGEAGQFVRWRGIGRRSPLVAGVFAFFLLSMAGIPLTAGFVGKWAVFTVALAAGAWPVVIAAVLCSIIAVFFYVRVILLMFFEDDDVSAQGEVASVTKPSVLTSATIFVGVAATLVLGVVPGPVLDLAANAGQFVR.

The next 14 helical transmembrane spans lie at valine 13–valine 33, leucine 40–valine 60, proline 87–alanine 107, histidine 141–alanine 161, leucine 164–leucine 184, phenylalanine 200–phenylalanine 220, leucine 243–phenylalanine 263, proline 275–leucine 295, glutamine 310–valine 330, methionine 337–glutamine 357, valine 373–leucine 393, valine 417–phenylalanine 437, glycine 451–valine 471, and alanine 502–leucine 522.

The protein belongs to the complex I subunit 2 family. In terms of assembly, NDH-1 is composed of 14 different subunits. Subunits NuoA, H, J, K, L, M, N constitute the membrane sector of the complex.

The protein resides in the cell membrane. It carries out the reaction a quinone + NADH + 5 H(+)(in) = a quinol + NAD(+) + 4 H(+)(out). NDH-1 shuttles electrons from NADH, via FMN and iron-sulfur (Fe-S) centers, to quinones in the respiratory chain. The immediate electron acceptor for the enzyme in this species is believed to be a menaquinone. Couples the redox reaction to proton translocation (for every two electrons transferred, four hydrogen ions are translocated across the cytoplasmic membrane), and thus conserves the redox energy in a proton gradient. The protein is NADH-quinone oxidoreductase subunit N of Nocardioides sp. (strain ATCC BAA-499 / JS614).